The sequence spans 488 residues: Gamma-aminobutyric acid receptor subunit beta-4 (488 aa).

Positions 1–25 are cleaved as a signal peptide; the sequence is MWTFQADRLSGIVSALAALCVACCA. Over 26-244 the chain is Extracellular; sequence QSPSTGNISV…SFRIKRNIGY (219 aa). Asn32, Asn104, Asn173, and Asn195 each carry an N-linked (GlcNAc...) asparagine glycan. Cys160 and Cys174 are oxidised to a cystine. Transmembrane regions (helical) follow at residues 245-266, 271-292, and 304-326; these read FILQTYMPSILITILSWVSFWI, SAARVALGVTTVLTMTTINTHL, and AIDVYLMGCFVFVFLALLEYAFV. Residues 327 to 465 lie on the Cytoplasmic side of the membrane; that stretch reads NYIFFGRGPR…DLTDVSTIDK (139 aa). The helical transmembrane segment at 466–487 threads the bilayer; that stretch reads WSRIIFPITFGFFNLVYWLYYV.

Belongs to the ligand-gated ion channel (TC 1.A.9) family. Gamma-aminobutyric acid receptor (TC 1.A.9.5) subfamily. GABRB4 sub-subfamily. In terms of assembly, generally pentameric. There are five types of GABA(A) receptor chains: alpha, beta, gamma, delta, and rho.

It localises to the postsynaptic cell membrane. It is found in the cell membrane. Its function is as follows. GABA, the major inhibitory neurotransmitter in the vertebrate brain, mediates neuronal inhibition by binding to the GABA/benzodiazepine receptor and opening an integral chloride channel. The polypeptide is Gamma-aminobutyric acid receptor subunit beta-4 (GABRB4) (Gallus gallus (Chicken)).